We begin with the raw amino-acid sequence, 234 residues long: Glucosamine-6-phosphate deaminase (234 aa).

Aspartate 62 functions as the Proton acceptor; for enolization step in the catalytic mechanism. Asparagine 128 functions as the For ring-opening step in the catalytic mechanism. Residue histidine 130 is the Proton acceptor; for ring-opening step of the active site. Catalysis depends on glutamate 135, which acts as the For ring-opening step.

Belongs to the glucosamine/galactosamine-6-phosphate isomerase family. NagB subfamily.

It carries out the reaction alpha-D-glucosamine 6-phosphate + H2O = beta-D-fructose 6-phosphate + NH4(+). It functions in the pathway amino-sugar metabolism; N-acetylneuraminate degradation; D-fructose 6-phosphate from N-acetylneuraminate: step 5/5. Its function is as follows. Catalyzes the reversible isomerization-deamination of glucosamine 6-phosphate (GlcN6P) to form fructose 6-phosphate (Fru6P) and ammonium ion. This chain is Glucosamine-6-phosphate deaminase, found in Streptococcus equi subsp. zooepidemicus (strain H70).